The chain runs to 1563 residues: Superkiller complex protein 3 (1563 aa).

At Ser-2 the chain carries N-acetylserine. TPR repeat units follow at residues Val-6–Asn-39, Tyr-40–Gln-73, Tyr-157–Ile-196, Gly-272–Cys-305, Ala-307–Phe-339, Pro-386–Leu-419, Ala-420–Val-453, Glu-455–Met-492, Gly-493–Asp-527, Lys-564–Asp-597, Cys-598–Ser-631, Thr-632–Tyr-665, Tyr-633–Tyr-665, Gly-673–Val-713, Val-790–Asn-824, Leu-826–Asn-860, Ala-861–Tyr-894, Ala-980–Ala-1013, Asn-1020–Asp-1053, Ile-1055–Glu-1084, Lys-1325–Gln-1358, and Val-1399–Gln-1432.

Belongs to the SKI3 family. In terms of assembly, component of the SKI complex which consists of SKIC2, SKIC3 and SKIC8. Interacts with PAF1.

The protein resides in the cytoplasm. Its subcellular location is the nucleus. Its function is as follows. Component of the SKI complex, a multiprotein complex that assists the RNA-degrading exosome during the mRNA decay and quality-control pathways. The SKI complex catalyzes mRNA extraction from 80S ribosomal complexes in the 3'-5' direction and channels mRNA to the cytosolic exosome for degradation. SKI-mediated extraction of mRNA from stalled ribosomes allow binding of the Pelota-HBS1L complex and subsequent ribosome disassembly by ABCE1 for ribosome recycling. In the nucleus, the SKI complex associates with transcriptionally active genes in a manner dependent on PAF1 complex (PAF1C). The polypeptide is Superkiller complex protein 3 (Mus musculus (Mouse)).